The primary structure comprises 75 residues: Pi-hexatoxin-Hi1d (75 aa).

Cystine bridges form between Cys3-Cys18, Cys10-Cys23, Cys17-Cys33, Cys40-Cys55, Cys47-Cys60, and Cys54-Cys71. 2 Domain repeats span residues 3 to 33 (CIRKWLSCVDRKNDCCEGLECYKRRHSFEVC) and 40 to 71 (CLVKWKQCDGRERDCCAGLECWKRSGNKSSVC). Residues 3–71 (CIRKWLSCVD…KRSGNKSSVC (69 aa)) form a 2 X approximate repeats with cysteine pattern C-C-CC-C-C region.

It belongs to the psalmotoxin-1 family. Double-knot toxin subfamily. Expressed by the venom gland.

It localises to the secreted. Its function is as follows. This toxin potently and selectively inhibits ASIC1a, an isoform of the gene ASIC1. It incompletely inhibits ASIC1a activation in a pH-independent and slowly reversible manner. This toxin acts by binding to and stabilizing the closed state of the channel, thereby impeding the transition into a conducting state. This toxin may bind to the acidic pocket of ASIC1a, since mutation of a key residue of this pocket (Arg-350) abolishes the ability of the toxin to inhibit ASIC1a. In vivo, this toxin protects the brain from neuronal injury when administered up to 8 hours after stroke onset. The sequence is that of Pi-hexatoxin-Hi1d from Hadronyche infensa (Fraser island funnel-web spider).